The sequence spans 268 residues: Single-stranded DNA-binding protein WHY3, chloroplastic (268 aa).

The transit peptide at Met-1 to Ser-75 directs the protein to the chloroplast. The required for ssDNA binding stretch occupies residues Lys-93 to Leu-98. The Nuclear localization signal signature appears at Lys-171–Lys-185.

It belongs to the Whirly family. Homotetramer.

It localises to the plastid. Its subcellular location is the chloroplast. The protein localises to the nucleus. Functionally, single-stranded DNA-binding protein that functions in both chloroplasts and nucleus. In chloroplasts, maintains plastid genome stability by preventing break-induced and short homology-dependent illegitimate recombinations. In the nucleus, is recruited to a distal element upstream of the kinesin KP1 to mediate the transcriptional repression of KP1. Can bind double-stranded DNA in vivo. The chain is Single-stranded DNA-binding protein WHY3, chloroplastic (WHY3) from Arabidopsis thaliana (Mouse-ear cress).